The primary structure comprises 95 residues: Aspartyl/glutamyl-tRNA(Asn/Gln) amidotransferase subunit C (95 aa).

This sequence belongs to the GatC family. In terms of assembly, heterotrimer of A, B and C subunits.

It carries out the reaction L-glutamyl-tRNA(Gln) + L-glutamine + ATP + H2O = L-glutaminyl-tRNA(Gln) + L-glutamate + ADP + phosphate + H(+). The catalysed reaction is L-aspartyl-tRNA(Asn) + L-glutamine + ATP + H2O = L-asparaginyl-tRNA(Asn) + L-glutamate + ADP + phosphate + 2 H(+). In terms of biological role, allows the formation of correctly charged Asn-tRNA(Asn) or Gln-tRNA(Gln) through the transamidation of misacylated Asp-tRNA(Asn) or Glu-tRNA(Gln) in organisms which lack either or both of asparaginyl-tRNA or glutaminyl-tRNA synthetases. The reaction takes place in the presence of glutamine and ATP through an activated phospho-Asp-tRNA(Asn) or phospho-Glu-tRNA(Gln). In Pseudomonas syringae pv. syringae (strain B728a), this protein is Aspartyl/glutamyl-tRNA(Asn/Gln) amidotransferase subunit C.